The primary structure comprises 209 residues: Uracil phosphoribosyltransferase (209 aa).

Residues arginine 79, arginine 104, and 131 to 139 (DPMLATGNS) each bind 5-phospho-alpha-D-ribose 1-diphosphate. Uracil-binding positions include isoleucine 194 and 199-201 (GDA). Position 200 (aspartate 200) interacts with 5-phospho-alpha-D-ribose 1-diphosphate.

This sequence belongs to the UPRTase family. Mg(2+) serves as cofactor.

The catalysed reaction is UMP + diphosphate = 5-phospho-alpha-D-ribose 1-diphosphate + uracil. Its pathway is pyrimidine metabolism; UMP biosynthesis via salvage pathway; UMP from uracil: step 1/1. With respect to regulation, allosterically activated by GTP. Functionally, catalyzes the conversion of uracil and 5-phospho-alpha-D-ribose 1-diphosphate (PRPP) to UMP and diphosphate. In Polaromonas naphthalenivorans (strain CJ2), this protein is Uracil phosphoribosyltransferase.